The primary structure comprises 32 residues: Tail virion protein G9P (32 aa).

Residues 8 to 24 (FASFVLGWCLRSGITYF) form a helical membrane-spanning segment.

It belongs to the inovirus G9P protein family.

The protein resides in the virion. It is found in the host membrane. Functionally, may initiate with G7P the virion concomitant assembly-budding process, by interacting with the packaging signal of the viral genome. The assembly-budding takes place at the host inner membrane. In turn, G7P and G9P are present at the end of the filamentous virion that emerges first from the bacterial host. The chain is Tail virion protein G9P (IX) from Escherichia coli (Bacteriophage f1).